The sequence spans 653 residues: Chaperone protein DnaK (653 aa).

Position 200 is a phosphothreonine; by autocatalysis (T200). The interval 612 to 653 (QGAAGAAGAAGGAGAAAGAEAAGASQQADDVVDAEFKEVKKD) is disordered. The segment covering 627–639 (AAGAEAAGASQQA) has biased composition (low complexity).

Belongs to the heat shock protein 70 family.

Its function is as follows. Acts as a chaperone. The protein is Chaperone protein DnaK of Paraburkholderia phymatum (strain DSM 17167 / CIP 108236 / LMG 21445 / STM815) (Burkholderia phymatum).